Here is a 336-residue protein sequence, read N- to C-terminus: 3-isopropylmalate dehydrogenase (336 aa).

Residues Arg87, Arg97, Arg121, and Asp211 each contribute to the substrate site. Mg(2+) is bound by residues Asp211, Asp235, and Asp239. 271-283 (GSAPDIAGQGIAD) contributes to the NAD(+) binding site.

The protein belongs to the isocitrate and isopropylmalate dehydrogenases family. LeuB type 2 subfamily. Homodimer. Mg(2+) serves as cofactor. Requires Mn(2+) as cofactor.

The protein localises to the cytoplasm. The enzyme catalyses (2R,3S)-3-isopropylmalate + NAD(+) = 4-methyl-2-oxopentanoate + CO2 + NADH. It functions in the pathway amino-acid biosynthesis; L-leucine biosynthesis; L-leucine from 3-methyl-2-oxobutanoate: step 3/4. In terms of biological role, catalyzes the oxidation of 3-carboxy-2-hydroxy-4-methylpentanoate (3-isopropylmalate) to 3-carboxy-4-methyl-2-oxopentanoate. The product decarboxylates to 4-methyl-2 oxopentanoate. In Mycobacterium bovis (strain ATCC BAA-935 / AF2122/97), this protein is 3-isopropylmalate dehydrogenase.